A 409-amino-acid polypeptide reads, in one-letter code: Magnesium-protoporphyrin IX monomethyl ester [oxidative] cyclase, chloroplastic (409 aa).

2 disordered regions span residues 1–23 and 36–60; these read MAAE…SNPS and RMSA…TKKE. A chloroplast-targeting transit peptide spans 1–36; that stretch reads MAAEMALVKPISKFSSPKLSNPSKFLSGRRFSTVIR. The segment covering 13-23 has biased composition (polar residues); the sequence is KFSSPKLSNPS.

It belongs to the AcsF family. As to quaternary structure, part of the FLU-containing chloroplast membrane complex composed of FLU, CRD1, PORB, PORC, CHLP and HEMA1. Interacts with YCF54 in chloroplasts. Requires Fe cation as cofactor.

It is found in the plastid. Its subcellular location is the chloroplast inner membrane. The protein resides in the chloroplast thylakoid membrane. It catalyses the reaction Mg-protoporphyrin IX 13-monomethyl ester + 3 NADPH + 3 O2 + 2 H(+) = 3,8-divinyl protochlorophyllide a + 3 NADP(+) + 5 H2O. It participates in porphyrin-containing compound metabolism; chlorophyll biosynthesis. Catalytic component of the MgProto monomethylester (MgProtoME) cyclase complex that catalyzes the formation of the isocyclic ring in chlorophyll biosynthesis. Mediates the cyclase reaction, which results in the formation of divinylprotochlorophyllide (Pchlide) characteristic of all chlorophylls from magnesium-protoporphyrin IX 13-monomethyl ester (MgPMME). This chain is Magnesium-protoporphyrin IX monomethyl ester [oxidative] cyclase, chloroplastic, found in Arabidopsis thaliana (Mouse-ear cress).